A 639-amino-acid chain; its full sequence is MAESDGSNNENGNLDTVTQKLDRGVAAIKPQYLTTKEKFHVFIDADGKEVVDKQTCSELSGNDAENTVRAEDAAEPEAKRIKLDDGTGEGQDKPPTSAENKQEKKRARGQNKSRPHMKHSQFEENKLCPSVTQECASKCFFGDKCKFLHDVAKYVSEKPEDIRPNCYLYETFGKCIYGVTCRFAKSHLGDNFKNLINEELMKQWEGQVLVKNSLDKSLKEQLRKRKVVFEKTDKYLKLCNKSGDSLKIKSPVVKEDNAAQVVQKDSPVTTVGAVTDEDLVKLRPCEKKTIDFRNKLYLAPLTTCGNLPFRRLCKRFGADITCGEMAMCTNLLQGQPSEWALLKRHHSEDIFGVQLEGAFPDTMTKCAELLNRTIDVDFVDINVGCPIDLVYKKGGGCGLMNRTNKFEQIVKGMNSVLDVPLTVKIRTGVQEKINIAHKLIPNLRDWGVSLVTLHGRSREQRYTKLADWEYIAQCADIASPLPLFGNGDIISYEDANRALQTGVSGIMLARGALLKPWLFTEIKEQRHWDISSTERFDILKDFTNYGLEHWGSDCQGVEKTRRFMLEWLSFLCRYIPIGLLEHVPQKINERPPYYMGRDYMETLMASQNVTDWIKISEMLLGPVPPNFSFLPKHKANSYK.

2 stretches are compositionally biased toward polar residues: residues 1–19 and 54–65; these read MAESDGSNNENGNLDTVTQ and QTCSELSGNDAE. Disordered regions lie at residues 1 to 20 and 52 to 122; these read MAESDGSNNENGNLDTVTQK and DKQT…HSQF. Positions 66-85 are enriched in basic and acidic residues; the sequence is NTVRAEDAAEPEAKRIKLDD. The segment covering 103-119 has biased composition (basic residues); it reads EKKRARGQNKSRPHMKH. 2 C3H1-type zinc fingers span residues 122 to 152 and 160 to 190; these read FEENKLCPSVTQECASKCFFGDKCKFLHDVA and EDIRPNCYLYETFGKCIYGVTCRFAKSHLGD. FMN-binding positions include 300–302 and glutamine 354; that span reads PLT. Cysteine 385 serves as the catalytic Proton donor. Residues lysine 424, histidine 454, 486–488, and 509–510 each bind FMN; these read NGD and AR.

This sequence belongs to the Dus family. Dus3 subfamily. FMN is required as a cofactor.

It catalyses the reaction 5,6-dihydrouridine(47) in tRNA + NAD(+) = uridine(47) in tRNA + NADH + H(+). It carries out the reaction 5,6-dihydrouridine(47) in tRNA + NADP(+) = uridine(47) in tRNA + NADPH + H(+). The catalysed reaction is a 5,6-dihydrouridine in mRNA + NAD(+) = a uridine in mRNA + NADH + H(+). The enzyme catalyses a 5,6-dihydrouridine in mRNA + NADP(+) = a uridine in mRNA + NADPH + H(+). Its function is as follows. Catalyzes the synthesis of dihydrouridine, a modified base, in various RNAs, such as tRNAs, mRNAs and some long non-coding RNAs (lncRNAs). Mainly modifies the uridine in position 47 (U47) in the D-loop of most cytoplasmic tRNAs. Also able to mediate the formation of dihydrouridine in some mRNAs, thereby regulating their translation. The protein is tRNA-dihydrouridine(47) synthase [NAD(P)(+)]-like (dus3l) of Xenopus tropicalis (Western clawed frog).